The sequence spans 213 residues: High frequency lysogenization protein HflD (213 aa).

Residues 99 to 126 are a coiled coil; it reads LSSAKGALDTLGNRINGLQRQLEHFDLQ.

It belongs to the HflD family. In terms of assembly, interacts with CII protein from phage lambda.

It localises to the cytoplasm. It is found in the cell inner membrane. Functionally, negative regulator of phage lambda lysogenization. Contributes to the degradation of the phage regulatory protein CII. Acts probably by holding CII on the membrane surface, away from the target promoters, but close to the FtsH protease. The sequence is that of High frequency lysogenization protein HflD from Escherichia coli O157:H7.